The following is a 219-amino-acid chain: Probable GTP-binding protein EngB (219 aa).

The EngB-type G domain maps to 24-207 (VQPEIAFAGR…HELIESWLRP (184 aa)). Residues 32-39 (GRSNAGKS), 59-63 (GRTQH), 81-84 (DLPG), 148-151 (TKCD), and 186-188 (FSA) each bind GTP. Mg(2+) contacts are provided by Ser-39 and Thr-61.

Belongs to the TRAFAC class TrmE-Era-EngA-EngB-Septin-like GTPase superfamily. EngB GTPase family. It depends on Mg(2+) as a cofactor.

Functionally, necessary for normal cell division and for the maintenance of normal septation. The protein is Probable GTP-binding protein EngB of Burkholderia cenocepacia (strain HI2424).